Consider the following 80-residue polypeptide: MTTTAAPRRPFFRRRKTCPFSGPNAPKIDYKDTRLLSRYISERGKIVPSRITAVSAKKQRELAQAIKRARFLGLLPYVIR.

This sequence belongs to the bacterial ribosomal protein bS18 family. Part of the 30S ribosomal subunit. Forms a tight heterodimer with protein bS6.

Its function is as follows. Binds as a heterodimer with protein bS6 to the central domain of the 16S rRNA, where it helps stabilize the platform of the 30S subunit. This is Small ribosomal subunit protein bS18 from Methylocella silvestris (strain DSM 15510 / CIP 108128 / LMG 27833 / NCIMB 13906 / BL2).